A 193-amino-acid chain; its full sequence is MDGGTLPRSAPPAPPVPVGCAARRRPASPELLRCSRRRRPATAETGGGAAAVARRNERERNRVKLVNLGFQALRQHVPHGGASKKLSKVETLRSAVEYIRALQRLLAEHDAVRNALAGGLRPQAVRPSAPRGPPGTTPVAASPSRASSSPGRGGSSEPGSPRSAYSSDDSGCEGALSPAERELLDFSSWLGGY.

Disordered regions lie at residues 1–27, 37–56, and 118–177; these read MDGG…RRPA, RRRP…ARRN, and GGLR…GALS. Positions 50–102 constitute a bHLH domain; it reads AAVARRNERERNRVKLVNLGFQALRQHVPHGGASKKLSKVETLRSAVEYIRAL. Residues 140-150 are compositionally biased toward low complexity; it reads AASPSRASSSP.

Efficient DNA binding requires dimerization with another basic helix-loop-helix (bHLH) protein. Forms heterodimers with bHLH transcription factor TCF3. May not heterodimerise with bHLH protein HAND1. In terms of tissue distribution, expressed in the placenta at a stage between the first and second trimesters and when it matures, at about 32-36 weeks. Expressed in the extravillous trophoblasts, the intermediate trophoblasts, and at lower levels in the cytotrophoblasts and stroma of chorionic villi of the developing placenta. Expressed in follicular T-helper (Tfh) cells.

The protein localises to the nucleus. Functionally, transcription factor. Binds to E-box motifs 5'-CANNTG-3' in the regulatory elements of target genes, probably as a heterodimer with another basic helix-loop-helix (bHLH) protein such as the transcription factor TCF3. May bind both open and closed chromatin, acting as a pioneer transcription factor to allow other factors to bind and activate lineage-specific genes. Required during post-implantation development for the generation of some differentiated trophoblast cell types. Transcriptional activity of ASCL2 may be antagonised in a subset of trophoblast cells by bHLH transcription factor HAND1, perhaps by competing for dimerization with other bHLH proteins. Involved in differentiation and function of follicular T-helper (Tfh) cells, thereby playing a role in germinal center responses; probably modulates expression of genes involved in Tfh cell function, such as BCL6. May also act as a suppressor of Th1-, Th2- and Th17-cell differentiation. Induces the formation of stem cells in intestinal crypts in vitro, synergistically activating transcription of target genes, such as SOX9, together with TCF4/beta-catenin. May form a bistable transcriptional switch, controlling expression of its own gene together with Wnt/R-spondin signaling, and thereby maintaining stem cell characteristics. Modulates expression of target genes, including perhaps down-regulating EGR1/Krox24 and chemokine CXCL10/Mob-1 and up-regulating CXCR4 and CDKN1C/p57kip2, in Schwann cells. May play a role in reducing proliferation of Schwann cells, perhaps acting via modulation of expression of CDKN1C. May be dispensable for blastocyst formation and later embryonic function. May be involved in the determination of neuronal precursors. The polypeptide is Achaete-scute homolog 2 (ASCL2) (Homo sapiens (Human)).